Consider the following 377-residue polypeptide: Queuine tRNA-ribosyltransferase (377 aa).

Asp-93 acts as the Proton acceptor in catalysis. Substrate contacts are provided by residues 93–97, Asp-147, Gln-190, and Gly-216; that span reads DSGGF. Residues 247 to 253 are RNA binding; that stretch reads GVGTPDD. The active-site Nucleophile is Asp-266. The segment at 271–275 is RNA binding; important for wobble base 34 recognition; it reads TRAGR. Zn(2+)-binding residues include Cys-304, Cys-306, Cys-309, and His-335.

The protein belongs to the queuine tRNA-ribosyltransferase family. As to quaternary structure, homodimer. Within each dimer, one monomer is responsible for RNA recognition and catalysis, while the other monomer binds to the replacement base PreQ1. The cofactor is Zn(2+).

It catalyses the reaction 7-aminomethyl-7-carbaguanine + guanosine(34) in tRNA = 7-aminomethyl-7-carbaguanosine(34) in tRNA + guanine. It functions in the pathway tRNA modification; tRNA-queuosine biosynthesis. Its function is as follows. Catalyzes the base-exchange of a guanine (G) residue with the queuine precursor 7-aminomethyl-7-deazaguanine (PreQ1) at position 34 (anticodon wobble position) in tRNAs with GU(N) anticodons (tRNA-Asp, -Asn, -His and -Tyr). Catalysis occurs through a double-displacement mechanism. The nucleophile active site attacks the C1' of nucleotide 34 to detach the guanine base from the RNA, forming a covalent enzyme-RNA intermediate. The proton acceptor active site deprotonates the incoming PreQ1, allowing a nucleophilic attack on the C1' of the ribose to form the product. After dissociation, two additional enzymatic reactions on the tRNA convert PreQ1 to queuine (Q), resulting in the hypermodified nucleoside queuosine (7-(((4,5-cis-dihydroxy-2-cyclopenten-1-yl)amino)methyl)-7-deazaguanosine). In Granulibacter bethesdensis (strain ATCC BAA-1260 / CGDNIH1), this protein is Queuine tRNA-ribosyltransferase.